The following is a 178-amino-acid chain: Putative pre-16S rRNA nuclease (178 aa).

Composition is skewed to basic and acidic residues over residues 1–18 (MDHA…DPGR) and 50–60 (PRSKDRGPDAP). Disordered regions lie at residues 1–23 (MDHA…RRIG) and 36–60 (SDPD…PDAP).

The protein belongs to the YqgF nuclease family.

Its subcellular location is the cytoplasm. Its function is as follows. Could be a nuclease involved in processing of the 5'-end of pre-16S rRNA. The protein is Putative pre-16S rRNA nuclease of Rhodococcus opacus (strain B4).